The following is a 240-amino-acid chain: 2-C-methyl-D-erythritol 2,4-cyclodiphosphate synthase, apicoplast (240 aa).

A divalent metal cation is bound by residues Asp71 and His73. Residues 71–73 and 115–116 contribute to the 4-CDP-2-C-methyl-D-erythritol 2-phosphate site; these read DIH and HS. Position 123 (His123) interacts with a divalent metal cation. Residues 137–139, 142–146, 181–187, and 212–214 contribute to the 4-CDP-2-C-methyl-D-erythritol 2-phosphate site; these read DIG, FPDKD, AQVPKIS, and GKT.

It belongs to the IspF family. As to quaternary structure, homotrimer. A divalent metal cation serves as cofactor.

It is found in the plastid. Its subcellular location is the apicoplast. The enzyme catalyses 4-CDP-2-C-methyl-D-erythritol 2-phosphate = 2-C-methyl-D-erythritol 2,4-cyclic diphosphate + CMP. Its pathway is isoprenoid biosynthesis; isopentenyl diphosphate biosynthesis via DXP pathway; isopentenyl diphosphate from 1-deoxy-D-xylulose 5-phosphate: step 4/6. Its function is as follows. In the mevalonate-independent isoprenoid biosynthetic pathway, converts 4-diphosphocytidyl-2C-methyl-D-erythritol 2-phosphate into 2C-methyl-D-erythritol 2,4-cyclodiphosphate and CMP. This Plasmodium falciparum (isolate 3D7) protein is 2-C-methyl-D-erythritol 2,4-cyclodiphosphate synthase, apicoplast.